The sequence spans 471 residues: Putative ABC transporter ATP-binding protein STK_11360 (471 aa).

ABC transporter domains are found at residues 4 to 241 (LEIK…LEPL) and 255 to 470 (VILE…VIKD). ATP-binding positions include 37-44 (GKSGSGKS) and 286-293 (GDNGSGKS).

This sequence belongs to the ABC transporter superfamily.

The protein localises to the cell membrane. Its function is as follows. Probably part of an ABC transporter complex. Responsible for energy coupling to the transport system. The chain is Putative ABC transporter ATP-binding protein STK_11360 from Sulfurisphaera tokodaii (strain DSM 16993 / JCM 10545 / NBRC 100140 / 7) (Sulfolobus tokodaii).